Here is a 117-residue protein sequence, read N- to C-terminus: Large ribosomal subunit protein bL20 (117 aa).

This sequence belongs to the bacterial ribosomal protein bL20 family.

Its function is as follows. Binds directly to 23S ribosomal RNA and is necessary for the in vitro assembly process of the 50S ribosomal subunit. It is not involved in the protein synthesizing functions of that subunit. The polypeptide is Large ribosomal subunit protein bL20 (Photobacterium profundum (strain SS9)).